The sequence spans 221 residues: Nuclear phosphoprotein UL3 homolog (221 aa).

This sequence belongs to the alphaherpesvirinae HHV-1 UL3 family. Phosphorylated.

Its subcellular location is the host nucleus. The polypeptide is Nuclear phosphoprotein UL3 homolog (Varicella-zoster virus (strain Oka vaccine) (HHV-3)).